A 280-amino-acid polypeptide reads, in one-letter code: Tumor necrosis factor ligand superfamily member 6 (280 aa).

Topologically, residues 1–80 (MQQPFNYPYP…KKRGNHSTGL (80 aa)) are cytoplasmic. The disordered stretch occupies residues 20–70 (SSPWAPPGTVLPCPTSVPRRPGQRRPPPPPPPPPLPPPPPSPLPPLPLPPL). The span at 43–69 (RRPPPPPPPPPLPPPPPSPLPPLPLPP) shows a compositional bias: pro residues. A helical; Signal-anchor for type II membrane protein membrane pass occupies residues 81 to 101 (CLLVMFFMVLVALVGLGLGMF). Residues 102 to 280 (QLFHLQKELA…SQTFFGLYKL (179 aa)) are Extracellular-facing. Residues 117–155 (TSQKHTASSLEKQIGHPSPPPEKKEQRKVAHLTGKPNSR) form a disordered region. Positions 144–280 (KVAHLTGKPN…SQTFFGLYKL (137 aa)) constitute a THD domain. Asparagine 183 carries an N-linked (GlcNAc...) asparagine glycan. Cysteine 201 and cysteine 232 form a disulfide bridge. 2 N-linked (GlcNAc...) asparagine glycosylation sites follow: asparagine 249 and asparagine 259.

Belongs to the tumor necrosis factor family. As to quaternary structure, homotrimer. Interacts with ARHGAP9, BAIAP2L1, BTK, CACNB3, CACNB4, CRK, DLG2, DNMBP, DOCK4, EPS8L3, FGR, FYB1, FYN, HCK, ITK, ITSN2, KALRN, LYN, MACC1, MIA, MPP4, MYO15A, NCF1, NCK1, NCK2, NCKIPSD, OSTF1, PIK3R1, PSTPIP1, RIMBP3C, SAMSN1, SH3GL3, SH3PXD2B, SH3PXD2A, SH3RF2, SKAP2, SNX33, SNX9, SORBS3, SPTA1, SRC, SRGAP1, SRGAP2, SRGAP3, TEC, TJP3 and YES1. Post-translationally, the soluble form derives from the membrane form by proteolytic processing. The membrane-bound form undergoes two successive intramembrane proteolytic cleavages. The first one is processed by ADAM10 producing an N-terminal fragment, which lacks the receptor-binding extracellular domain. This ADAM10-processed FasL (FasL APL) remnant form is still membrane anchored and further processed by SPPL2A that liberates the FasL intracellular domain (FasL ICD). FasL shedding by ADAM10 is a prerequisite for subsequent intramembrane cleavage by SPPL2A in T-cells. Phosphorylated by FGR on tyrosine residues; this is required for ubiquitination and subsequent internalization. In terms of processing, N-glycosylated. Glycosylation enhances apoptotic activity. Post-translationally, monoubiquitinated.

It is found in the cell membrane. The protein resides in the cytoplasmic vesicle lumen. It localises to the lysosome lumen. Its subcellular location is the secreted. The protein localises to the nucleus. Its function is as follows. Cytokine that binds to TNFRSF6/FAS, a receptor that transduces the apoptotic signal into cells. Involved in cytotoxic T-cell-mediated apoptosis, natural killer cell-mediated apoptosis and in T-cell development. Initiates fratricidal/suicidal activation-induced cell death (AICD) in antigen-activated T-cells contributing to the termination of immune responses. TNFRSF6/FAS-mediated apoptosis has also a role in the induction of peripheral tolerance. Binds to TNFRSF6B/DcR3, a decoy receptor that blocks apoptosis. Functionally, induces FAS-mediated activation of NF-kappa-B, initiating non-apoptotic signaling pathways. Can induce apoptosis but does not appear to be essential for this process. Cytoplasmic form induces gene transcription inhibition. This is Tumor necrosis factor ligand superfamily member 6 (FASLG) from Macaca fascicularis (Crab-eating macaque).